The following is a 459-amino-acid chain: MSWSILKLLREKPEELKEHVKKRFMDPSIVDEAYKTDLEWRRTLTYIQELRHKHNVVSREIPKLKGVDKEKKIKEAKQLLKELEEVEKKLKELEEKRQKLLFSLPNIVHETVPVGPDDTYNVPIRFWGKPRVWKGFIDQFKEQTEKYGFKVEYEVIDWKPVGHADMLEKVLRLGDTFKAGQVAGSRFYYLFNDIVFLDMALLAYAIDYLTSKGYTLVLPPYMLRHKVMMGVIDMDTFKDAIYKIEGEDLYLIATAEHPLAALHAWEDIPEEELPLKYVGISPCFRKEAGAGNRDLKGIFRVHQFHKVEQFVYAKPEDSWDIMEELISNAEHLFRGLGIPYRIVNIASGDLGAPAAKKYDLEAWMPAQGRYREMVSCSNVTDWQAFRLRIRLIRRKGMVKEYLHTLNSTAIASTRTITAILENFQEPDGTVIVPKVLRKYLEVFKSAPIDAIHPVKKEKN.

Threonine 254–glutamate 256 contributes to the L-serine binding site. Residues arginine 285–glutamate 287 and valine 301 each bind ATP. Glutamate 308 lines the L-serine pocket. Glutamate 372–serine 375 contacts ATP. An L-serine-binding site is contributed by threonine 408.

Belongs to the class-II aminoacyl-tRNA synthetase family. Type-1 seryl-tRNA synthetase subfamily. As to quaternary structure, homodimer. The tRNA molecule binds across the dimer.

Its subcellular location is the cytoplasm. It catalyses the reaction tRNA(Ser) + L-serine + ATP = L-seryl-tRNA(Ser) + AMP + diphosphate + H(+). The enzyme catalyses tRNA(Sec) + L-serine + ATP = L-seryl-tRNA(Sec) + AMP + diphosphate + H(+). It participates in aminoacyl-tRNA biosynthesis; selenocysteinyl-tRNA(Sec) biosynthesis; L-seryl-tRNA(Sec) from L-serine and tRNA(Sec): step 1/1. Catalyzes the attachment of serine to tRNA(Ser). Is also able to aminoacylate tRNA(Sec) with serine, to form the misacylated tRNA L-seryl-tRNA(Sec), which will be further converted into selenocysteinyl-tRNA(Sec). This Staphylothermus marinus (strain ATCC 43588 / DSM 3639 / JCM 9404 / F1) protein is Serine--tRNA ligase.